We begin with the raw amino-acid sequence, 236 residues long: Ribonuclease P protein component 3 (236 aa).

It belongs to the eukaryotic/archaeal RNase P protein component 3 family. Consists of a catalytic RNA component and at least 4-5 protein subunits.

The protein localises to the cytoplasm. The enzyme catalyses Endonucleolytic cleavage of RNA, removing 5'-extranucleotides from tRNA precursor.. Functionally, part of ribonuclease P, a protein complex that generates mature tRNA molecules by cleaving their 5'-ends. In Natronomonas pharaonis (strain ATCC 35678 / DSM 2160 / CIP 103997 / JCM 8858 / NBRC 14720 / NCIMB 2260 / Gabara) (Halobacterium pharaonis), this protein is Ribonuclease P protein component 3.